A 370-amino-acid polypeptide reads, in one-letter code: Aldo-keto reductase dtxS3 (370 aa).

Residue Asp-78 coordinates NADP(+). The active-site Proton donor is Tyr-83. His-174 serves as a coordination point for substrate. Residues 204–205 (SS), Gln-230, 259–269 (GPLASGRLARR), and 333–341 (GSVGRIEEA) each bind NADP(+).

This sequence belongs to the aldo/keto reductase family.

It participates in secondary metabolite biosynthesis. Its function is as follows. Aldo-keto reductase; part of the gene cluster that mediates the biosynthesis of destruxins, insecticidal cyclic hexadepsipeptides which induce flaccid paralysis and visceral muscle contraction in insects through targeting the calcium channels and vacuolar-type ATPases. The aldo-keto reductase dtxS3 converts alpha-ketoisocaproic acid from deaminated leucine into alpha-hydroxyisocaproic acid (HIC), which is the first substrate for destruxin assembly by dtxS1. L-aspartate decarboxylase dtxS4 converts aspartic acid into beta-alanine, the last substrate for the destruxin assembly line performed by dtxS1. The nonribosomal peptide synthetase dtxS1 synthesizes destruxins B and B2, whereas the cytochrome P450 monooxygenase dtxS2 is required to convert destruxin B into other destruxin derivatives, including destructins C, D, A and E. Destruxin E-diol (ED) is further produced in a non-enzymatic manner from destruxin E. Destruxins play an important role in virulence and escape from insect host immune defenses. This chain is Aldo-keto reductase dtxS3, found in Metarhizium robertsii (strain ARSEF 23 / ATCC MYA-3075) (Metarhizium anisopliae (strain ARSEF 23)).